Here is a 621-residue protein sequence, read N- to C-terminus: E3 SUMO-protein ligase PIAS2 (621 aa).

In terms of domain architecture, SAP spans 11-45 (VSSFRVSELQVLLGFAGRNKSGRKHDLLMRALHLL). Positions 19–23 (LQVLL) match the LXXLL motif motif. Glycyl lysine isopeptide (Lys-Gly) (interchain with G-Cter in SUMO2) cross-links involve residues Lys-46 and Lys-249. In terms of domain architecture, PINIT spans 134–299 (QPSPPIPPVH…SMSVYLVRQL (166 aa)). The SP-RING-type zinc finger occupies 331–412 (PDSEIATTSL…FMEILNDCSD (82 aa)). Cys-362, His-364, Cys-385, and Cys-388 together coordinate Zn(2+). Residues Lys-430, Lys-435, Lys-443, and Lys-452 each participate in a glycyl lysine isopeptide (Lys-Gly) (interchain with G-Cter in SUMO2) cross-link. Residues 467-473 (IDVIDLT) are SUMO1-binding. Phosphoserine is present on residues Ser-476, Ser-477, and Ser-478. The short motif at 484–492 (PPAKRKCIF) is the Nuclear localization signal element. Residue Lys-489 forms a Glycyl lysine isopeptide (Lys-Gly) (interchain with G-Cter in SUMO2) linkage. Ser-499 carries the post-translational modification Phosphoserine. A Glycyl lysine isopeptide (Lys-Gly) (interchain with G-Cter in SUMO2) cross-link involves residue Lys-502. A compositionally biased stretch (low complexity) spans 577-610 (TASSTSVTTTSPHESSTHVSSSSSRSETGVITSS). A disordered region spans residues 577–621 (TASSTSVTTTSPHESSTHVSSSSSRSETGVITSSGRNIPDIISLD).

Belongs to the PIAS family. In terms of assembly, binds SUMO1 and UBE2I. Interacts with AXIN1, JUN, MDM2, PARK7, TP53 and TP73 isoform alpha, but not TP73 isoform beta. Interacts with STAT4 following IL12 and IFN-alpha stimulation of T-cells. Interacts also with GTF2I, GTF2IRD1, IKFZ1, DAB2 and MSX2, as well as with several steroid receptors, including ESR1, ESR2, NR3C1, PGR, AR, and with NCOA2. Sumoylation of a target protein seems to enhance the interaction. Binds to sumoylated ELK1. Interacts with PLAG1. Binds DNA, such as CDKN1A promoter, in a sequence-specific manner. Interacts with KLF8; the interaction results in SUMO ligation and repression of KLF8 transcriptional activity and of its cell cycle progression into G(1) phase. Interacts with IFIH1/MDA5. Interacts with PML. Interacts with PRDM1. In terms of processing, sumoylated.

Its subcellular location is the nucleus speckle. The protein resides in the nucleus. It localises to the PML body. The catalysed reaction is S-ubiquitinyl-[E2 ubiquitin-conjugating enzyme]-L-cysteine + [acceptor protein]-L-lysine = [E2 ubiquitin-conjugating enzyme]-L-cysteine + N(6)-ubiquitinyl-[acceptor protein]-L-lysine.. The protein operates within protein modification; protein sumoylation. Functions as an E3-type small ubiquitin-like modifier (SUMO) ligase, stabilizing the interaction between UBE2I and the substrate, and as a SUMO-tethering factor. Plays a crucial role as a transcriptional coregulation in various cellular pathways, including the STAT pathway, the p53 pathway and the steroid hormone signaling pathway. The effects of this transcriptional coregulation, transactivation or silencing may vary depending upon the biological context and PIAS2 isoform studied. However, it seems to be mostly involved in gene silencing. Binds to sumoylated ELK1 and enhances its transcriptional activity by preventing recruitment of HDAC2 by ELK1, thus reversing SUMO-mediated repression of ELK1 transactivation activity. Isoform PIASx-beta, but not isoform PIASx-alpha, promotes MDM2 sumoylation. Isoform PIASx-alpha promotes PARK7 sumoylation. Isoform PIASx-beta promotes NCOA2 sumoylation more efficiently than isoform PIASx-alpha. Sumoylates PML at'Lys-65' and 'Lys-160'. The chain is E3 SUMO-protein ligase PIAS2 (Pias2) from Mus musculus (Mouse).